The sequence spans 256 residues: uncharacterized protein (256 aa).

This is an uncharacterized protein from Acanthamoeba polyphaga mimivirus (APMV).